A 329-amino-acid chain; its full sequence is Cathepsin K (329 aa).

The signal sequence occupies residues 1-15; the sequence is MWVFKFLLLPVVSFA. The propeptide at 16-114 is activation peptide; it reads LSPEETLDTQ…TLYTPEWEGR (99 aa). Asn103 is a glycosylation site (N-linked (GlcNAc...) asparagine). Cystine bridges form between Cys136–Cys177 and Cys170–Cys210. Cys139 is an active-site residue. Residue Asn213 is glycosylated (N-linked (GlcNAc...) asparagine). A disulfide bond links Cys269 and Cys318. Residues His276 and Asn296 contribute to the active site.

This sequence belongs to the peptidase C1 family.

The protein localises to the lysosome. It is found in the secreted. The protein resides in the apical cell membrane. The catalysed reaction is Broad proteolytic activity. With small-molecule substrates and inhibitors, the major determinant of specificity is P2, which is preferably Leu, Met &gt; Phe, and not Arg.. Its function is as follows. Thiol protease involved in osteoclastic bone resorption and may participate partially in the disorder of bone remodeling. Displays potent endoprotease activity against fibrinogen at acid pH. May play an important role in extracellular matrix degradation. Involved in the release of thyroid hormone thyroxine (T4) by limited proteolysis of TG/thyroglobulin in the thyroid follicle lumen. The chain is Cathepsin K (Ctsk) from Rattus norvegicus (Rat).